The sequence spans 53 residues: Mannose/glucose-specific lectin alpha chain (53 aa).

This sequence belongs to the leguminous lectin family. As to quaternary structure, heterodimer of an alpha and a beta chain.

Its function is as follows. This lectin specifically binds mannose and glucose. This is Mannose/glucose-specific lectin alpha chain from Vicia cracca (Bird vetch).